A 168-amino-acid chain; its full sequence is Phosphopantetheine adenylyltransferase (168 aa).

A substrate-binding site is contributed by Thr9. Residues 9-10 (TF) and His17 each bind ATP. Lys41, Leu73, and Arg87 together coordinate substrate. ATP-binding positions include 88-90 (GLR), Glu98, and 123-129 (YQFISGT).

The protein belongs to the bacterial CoaD family. As to quaternary structure, homohexamer. Requires Mg(2+) as cofactor.

It is found in the cytoplasm. It carries out the reaction (R)-4'-phosphopantetheine + ATP + H(+) = 3'-dephospho-CoA + diphosphate. The protein operates within cofactor biosynthesis; coenzyme A biosynthesis; CoA from (R)-pantothenate: step 4/5. Reversibly transfers an adenylyl group from ATP to 4'-phosphopantetheine, yielding dephospho-CoA (dPCoA) and pyrophosphate. In Ralstonia nicotianae (strain ATCC BAA-1114 / GMI1000) (Ralstonia solanacearum), this protein is Phosphopantetheine adenylyltransferase.